Reading from the N-terminus, the 196-residue chain is tRNA(Phe) 7-((3-amino-3-carboxypropyl)-4-demethylwyosine(37)-N(4))-methyltransferase 1 (196 aa).

Belongs to the TYW3 family.

It carries out the reaction 4-demethyl-7-[(3S)-3-amino-3-carboxypropyl]wyosine(37) in tRNA(Phe) + S-adenosyl-L-methionine = 7-[(3S)-3-amino-3-carboxypropyl]wyosine(37) in tRNA(Phe) + S-adenosyl-L-homocysteine + H(+). S-adenosyl-L-methionine-dependent methyltransferase that acts as a component of the wyosine derivatives biosynthesis pathway. Probably methylates N-4 position of wybutosine-86 to produce wybutosine-72. The sequence is that of tRNA(Phe) 7-((3-amino-3-carboxypropyl)-4-demethylwyosine(37)-N(4))-methyltransferase 1 from Pyrococcus horikoshii (strain ATCC 700860 / DSM 12428 / JCM 9974 / NBRC 100139 / OT-3).